A 90-amino-acid polypeptide reads, in one-letter code: Serine protease inhibitor Cvsi-1 (90 aa).

A signal peptide spans 1–19 (MDVVRTLILCVCLFGLTFA).

In terms of processing, contains 6 disulfide bonds. Detected in hemolymph (at protein level). In oysters collected in the summer the expression level is highest in the digestive gland with low levels of expression in gill, mantle, labial palp, style-sac midgut, gonad, heart, and hemocyte. In winter expression levels are higher in all tissues with highest expression levels observed in the digestive gland. Within the digestive gland expression is limited to the basophil cells of the digestive diverticula.

The protein resides in the secreted. Slow-binding inhibitor of serine proteases. The inhibitor rapidly binds to the protease forming a weak enzyme-inhibitor complex, and this is followed by a slow isomerization forming a tight-binding enzyme-inhibitor complex. Active against subtilisin A, perkinsin and trypsin with dissociation constants of 0.29 nM, 13.7 nM and 17.7 nM respectively. Not active against thermolysin, papain or pepsin. Has antiparasitic activity against the protozoan P.marinus. In Crassostrea virginica (Eastern oyster), this protein is Serine protease inhibitor Cvsi-1.